The primary structure comprises 286 residues: tRNA(Ile)-lysidine synthase (286 aa).

7–12 (SGGPDS) lines the ATP pocket.

It belongs to the tRNA(Ile)-lysidine synthase family.

Its subcellular location is the cytoplasm. It catalyses the reaction cytidine(34) in tRNA(Ile2) + L-lysine + ATP = lysidine(34) in tRNA(Ile2) + AMP + diphosphate + H(+). In terms of biological role, ligates lysine onto the cytidine present at position 34 of the AUA codon-specific tRNA(Ile) that contains the anticodon CAU, in an ATP-dependent manner. Cytidine is converted to lysidine, thus changing the amino acid specificity of the tRNA from methionine to isoleucine. The polypeptide is tRNA(Ile)-lysidine synthase (Mycoplasmopsis pulmonis (strain UAB CTIP) (Mycoplasma pulmonis)).